The sequence spans 290 residues: MIKLLVLWLLILTIFLKSPTVEGDVSFRLSGATTTSYGVFIKNLREALPYERKVYNIPLLRSSISGSGRYTLLHLTNYADETISVAVDVTNVYIMGYLAGDVSYFFNEASATEAAKFVFKDAKKKVTLPYSGNYERLQTAAGKIRENIPLGLPALDSAITTLYYYTASSAASALLVLIQSTAESARYKFIEQQIGKRVDKTFLPSLATISLENNWSALSKQIQIASTNNGQFESPVVLIDGNNQRVSITNASARVVTSNIALLLNRNNIAAIGEDISMTLIGFEHGLYGI.

The first 23 residues, 1–23 (MIKLLVLWLLILTIFLKSPTVEG), serve as a signal peptide directing secretion. Active-site residues include E183 and E212. N-linked (GlcNAc...) asparagine glycosylation is found at N214 and N250. A propeptide spans 271–290 (AIGEDISMTLIGFEHGLYGI) (removed in mature form).

The protein belongs to the ribosome-inactivating protein family. Type 1 RIP subfamily. Appears to undergo proteolytic cleavage in the C-terminal to produce a shorter protein.

The catalysed reaction is Endohydrolysis of the N-glycosidic bond at one specific adenosine on the 28S rRNA.. Ribosome-inactivating protein of type 1, inhibits protein synthesis in animal cells. The polypeptide is Ribosome-inactivating protein bryodin I (Bryonia dioica (Red bryony)).